We begin with the raw amino-acid sequence, 147 residues long: Sec-independent protein translocase protein TatB (147 aa).

The chain crosses the membrane as a helical span at residues 2–22 (FDGIGFMELLLIGVLGLVVLG). The segment covering 85–97 (QLKQAAQSVNRPY) has biased composition (polar residues). Residues 85–147 (QLKQAAQSVN…DTRSNPKANG (63 aa)) form a disordered region. A compositionally biased stretch (low complexity) spans 113 to 133 (ASQSVSTEASPSASSAPTSES).

It belongs to the TatB family. In terms of assembly, the Tat system comprises two distinct complexes: a TatABC complex, containing multiple copies of TatA, TatB and TatC subunits, and a separate TatA complex, containing only TatA subunits. Substrates initially bind to the TatABC complex, which probably triggers association of the separate TatA complex to form the active translocon.

Its subcellular location is the cell inner membrane. Functionally, part of the twin-arginine translocation (Tat) system that transports large folded proteins containing a characteristic twin-arginine motif in their signal peptide across membranes. Together with TatC, TatB is part of a receptor directly interacting with Tat signal peptides. TatB may form an oligomeric binding site that transiently accommodates folded Tat precursor proteins before their translocation. The chain is Sec-independent protein translocase protein TatB from Shewanella sp. (strain ANA-3).